A 258-amino-acid polypeptide reads, in one-letter code: Putative cysteine-rich repeat secretory protein 61 (258 aa).

A signal peptide spans Met-1–Ser-31. 2 Gnk2-homologous domains span residues Tyr-38 to Phe-140 and Asp-146 to Phe-253.

It belongs to the cysteine-rich repeat secretory protein family.

Its subcellular location is the secreted. This Arabidopsis thaliana (Mouse-ear cress) protein is Putative cysteine-rich repeat secretory protein 61 (CRRSP61).